Here is a 179-residue protein sequence, read N- to C-terminus: Large ribosomal subunit protein uL6 (179 aa).

This sequence belongs to the universal ribosomal protein uL6 family. In terms of assembly, part of the 50S ribosomal subunit.

Its function is as follows. This protein binds to the 23S rRNA, and is important in its secondary structure. It is located near the subunit interface in the base of the L7/L12 stalk, and near the tRNA binding site of the peptidyltransferase center. The protein is Large ribosomal subunit protein uL6 of Geobacter sulfurreducens (strain ATCC 51573 / DSM 12127 / PCA).